The following is a 297-amino-acid chain: Thiosulfate sulfurtransferase (297 aa).

At Lys-14 the chain carries N6-acetyllysine; alternate. Lys-14 is modified (N6-succinyllysine; alternate). One can recognise a Rhodanese 1 domain in the interval 25–143 (LGPSLRVLDA…WLKEGHPVTS (119 aa)). O-linked (GlcNAc) serine glycosylation occurs at Ser-35. Ser-38 carries the phosphoserine modification. At Lys-136 the chain carries N6-acetyllysine; alternate. Lys-136 carries the N6-succinyllysine; alternate modification. Positions 144 to 159 (EPSRPEPAVFKATLNL) are hinge. Residue Lys-163 is modified to N6-acetyllysine. The 116-residue stretch at 173–288 (QSKRFQLVDS…WFRRAPPETR (116 aa)) folds into the Rhodanese 2 domain. At Lys-175 the chain carries N6-acetyllysine; alternate. Residue Lys-175 is modified to N6-succinyllysine; alternate. A substrate-binding site is contributed by Arg-187. 2 positions are modified to N6-acetyllysine; alternate: Lys-219 and Lys-224. N6-succinyllysine; alternate occurs at positions 219 and 224. Lys-236 is modified (N6-acetyllysine). At Lys-237 the chain carries N6-acetyllysine; alternate. Lys-237 is subject to N6-succinyllysine; alternate. The active-site Cysteine persulfide intermediate is Cys-248. Lys-250 is a substrate binding site.

In terms of assembly, monomer. In terms of tissue distribution, expressed in numerous tissues.

Its subcellular location is the mitochondrion matrix. The enzyme catalyses thiosulfate + hydrogen cyanide = thiocyanate + sulfite + 2 H(+). Together with MRPL18, acts as a mitochondrial import factor for the cytosolic 5S rRNA. Only the nascent unfolded cytoplasmic form is able to bind to the 5S rRNA. Formation of iron-sulfur complexes and cyanide detoxification. The sequence is that of Thiosulfate sulfurtransferase (Tst) from Mus musculus (Mouse).